Here is a 74-residue protein sequence, read N- to C-terminus: UPF0248 protein MK0350 (74 aa).

The protein belongs to the UPF0248 family.

The sequence is that of UPF0248 protein MK0350 from Methanopyrus kandleri (strain AV19 / DSM 6324 / JCM 9639 / NBRC 100938).